The chain runs to 508 residues: Protein O-glucosyltransferase 3 (508 aa).

The signal sequence occupies residues 1–24 (MLGVRRALLLPPLQLALLVAAGTG). The Filamin repeat unit spans residues 25–134 (ARVSAPRSLA…VAQSPYILKG (110 aa)). N-linked (GlcNAc...) asparagine glycosylation is present at Asn307. A disordered region spans residues 480-508 (RDGMERVPQPDDSTSVRQCHRKRPEREEL). The Prevents secretion from ER signature appears at 505-508 (REEL).

Belongs to the KDELC family.

Its subcellular location is the endoplasmic reticulum lumen. The enzyme catalyses L-seryl-[EGF-like domain protein] + UDP-alpha-D-glucose = 3-O-(beta-D-glucosyl)-L-seryl-[EGF-like domain protein] + UDP + H(+). It catalyses the reaction L-seryl-[EGF-like domain protein] + UDP-alpha-D-xylose = 3-O-(beta-D-xylosyl)-L-seryl-[EGF-like domain protein] + UDP + H(+). Its pathway is protein modification; protein glycosylation. Protein glucosyltransferase that catalyzes the transfer of glucose from UDP-glucose to a serine residue within the consensus sequence peptide C-X-N-T-X-G-S-F-X-C. Can also catalyze the transfer of xylose from UDP-xylose but less efficiently. Specifically targets extracellular EGF repeats of proteins such as NOTCH1, NOTCH3, FBN1, FBN2 and LTBP1. May regulate the transport of NOTCH1 and NOTCH3 to the plasma membrane and thereby the Notch signaling pathway. This is Protein O-glucosyltransferase 3 (Poglut3) from Rattus norvegicus (Rat).